The sequence spans 303 residues: Phosphoribosylaminoimidazole-succinocarboxamide synthase (303 aa).

It belongs to the SAICAR synthetase family.

It catalyses the reaction 5-amino-1-(5-phospho-D-ribosyl)imidazole-4-carboxylate + L-aspartate + ATP = (2S)-2-[5-amino-1-(5-phospho-beta-D-ribosyl)imidazole-4-carboxamido]succinate + ADP + phosphate + 2 H(+). Its pathway is purine metabolism; IMP biosynthesis via de novo pathway; 5-amino-1-(5-phospho-D-ribosyl)imidazole-4-carboxamide from 5-amino-1-(5-phospho-D-ribosyl)imidazole-4-carboxylate: step 1/2. In Pichia angusta (Yeast), this protein is Phosphoribosylaminoimidazole-succinocarboxamide synthase (ADE1).